A 137-amino-acid polypeptide reads, in one-letter code: uncharacterized protein (137 aa).

This is an uncharacterized protein from Mycoplasma genitalium (strain ATCC 33530 / DSM 19775 / NCTC 10195 / G37) (Mycoplasmoides genitalium).